The chain runs to 118 residues: NADH-ubiquinone oxidoreductase chain 3 (118 aa).

2 helical membrane passes run F4–V24 and I87–L107.

This sequence belongs to the complex I subunit 3 family.

The protein localises to the mitochondrion membrane. It carries out the reaction a ubiquinone + NADH + 5 H(+)(in) = a ubiquinol + NAD(+) + 4 H(+)(out). In terms of biological role, core subunit of the mitochondrial membrane respiratory chain NADH dehydrogenase (Complex I) that is believed to belong to the minimal assembly required for catalysis. Complex I functions in the transfer of electrons from NADH to the respiratory chain. The immediate electron acceptor for the enzyme is believed to be ubiquinone. This is NADH-ubiquinone oxidoreductase chain 3 (ND3) from Panax ginseng (Korean ginseng).